The chain runs to 162 residues: uncharacterized protein (162 aa).

The protein resides in the cytoplasm. The protein localises to the nucleus. This is an uncharacterized protein from Schizosaccharomyces pombe (strain 972 / ATCC 24843) (Fission yeast).